The chain runs to 437 residues: Ribosomal protein uS12 methylthiotransferase RimO (437 aa).

The MTTase N-terminal domain maps to Asn-9–Lys-128. The [4Fe-4S] cluster site is built by Cys-18, Cys-57, Cys-91, Cys-152, Cys-156, and Cys-159. The Radical SAM core domain maps to Thr-138–Asp-368. In terms of domain architecture, TRAM spans Gln-371–Ala-437.

Belongs to the methylthiotransferase family. RimO subfamily. [4Fe-4S] cluster is required as a cofactor.

It is found in the cytoplasm. It catalyses the reaction L-aspartate(89)-[ribosomal protein uS12]-hydrogen + (sulfur carrier)-SH + AH2 + 2 S-adenosyl-L-methionine = 3-methylsulfanyl-L-aspartate(89)-[ribosomal protein uS12]-hydrogen + (sulfur carrier)-H + 5'-deoxyadenosine + L-methionine + A + S-adenosyl-L-homocysteine + 2 H(+). Catalyzes the methylthiolation of an aspartic acid residue of ribosomal protein uS12. The chain is Ribosomal protein uS12 methylthiotransferase RimO from Flavobacterium johnsoniae (strain ATCC 17061 / DSM 2064 / JCM 8514 / BCRC 14874 / CCUG 350202 / NBRC 14942 / NCIMB 11054 / UW101) (Cytophaga johnsonae).